The chain runs to 97 residues: Mitochondrial import inner membrane translocase subunit Tim8 A (97 aa).

The Twin CX3C motif motif lies at 43–66 (CWEKCMDKPGPKLDSRAEACFVNC). Disulfide bonds link C43/C66 and C47/C62. 4 positions are modified to phosphoserine: S57, S87, S94, and S96.

The protein belongs to the small Tim family. In terms of assembly, heterohexamer; composed of 3 copies of TIMM8A and 3 copies of TIMM13, named soluble 70 kDa complex. Associates with the TIM22 complex, whose core is composed of TIMM22.

The protein resides in the mitochondrion inner membrane. Functionally, mitochondrial intermembrane chaperone that participates in the import and insertion of some multi-pass transmembrane proteins into the mitochondrial inner membrane. Also required for the transfer of beta-barrel precursors from the TOM complex to the sorting and assembly machinery (SAM complex) of the outer membrane. Acts as a chaperone-like protein that protects the hydrophobic precursors from aggregation and guide them through the mitochondrial intermembrane space. The TIMM8-TIMM13 complex mediates the import of proteins such as TIMM23, SLC25A12/ARALAR1 and SLC25A13/ARALAR2, while the predominant TIMM9-TIMM10 70 kDa complex mediates the import of much more proteins. The sequence is that of Mitochondrial import inner membrane translocase subunit Tim8 A (Timm8a) from Rattus norvegicus (Rat).